Consider the following 113-residue polypeptide: Ig kappa chain V-II region 7S34.1 (113 aa).

Residues 1 to 23 are framework-1; the sequence is DIVMTQTAPSALVTPGESVSISC. An intrachain disulfide couples Cys-23 to Cys-93. The complementarity-determining-1 stretch occupies residues 24–39; it reads RSSKSLLHSNGNTYLY. The tract at residues 40 to 54 is framework-2; the sequence is WFLQRPGQCPQLLIY. Residues 55–61 form a complementarity-determining-2 region; the sequence is RMSNLAS. Residues 62 to 93 are framework-3; that stretch reads GVPDRFSGSGSGTAFTLRISRVEAEDVGVYYC. A complementarity-determining-3 region spans residues 94-102; that stretch reads MQQREYPYT. The framework-4 stretch occupies residues 103-112; the sequence is FGGGTKLEIK.

The polypeptide is Ig kappa chain V-II region 7S34.1 (Mus musculus (Mouse)).